The chain runs to 179 residues: Inner membrane-spanning protein YciB (179 aa).

The next 6 membrane-spanning stretches (helical) occupy residues 3–23 (FLFD…ADIY), 24–44 (TATA…WFRH), 49–69 (PMQW…LVLH), 76–96 (WKPT…VLVW), 121–141 (LAWA…AYQF), and 149–169 (FKLF…SVWL).

It belongs to the YciB family.

Its subcellular location is the cell inner membrane. Functionally, plays a role in cell envelope biogenesis, maintenance of cell envelope integrity and membrane homeostasis. This is Inner membrane-spanning protein YciB from Cupriavidus taiwanensis (strain DSM 17343 / BCRC 17206 / CCUG 44338 / CIP 107171 / LMG 19424 / R1) (Ralstonia taiwanensis (strain LMG 19424)).